The primary structure comprises 315 residues: Ankyrin repeat domain-containing protein SOWAHD (315 aa).

The segment at 1–39 (MAQLGGAANRAPTASLAPTSQSLRCAPQPRPSRADTGSL) is disordered. 3 ANK repeats span residues 112-141 (PREH…ELLL), 147-162 (TGYS…GRHE), and 186-216 (GGLT…DATR).

Belongs to the SOWAH family.

This Homo sapiens (Human) protein is Ankyrin repeat domain-containing protein SOWAHD (SOWAHD).